The following is a 336-amino-acid chain: Sex determination protein tasselseed-2 (336 aa).

Residue 59-83 (IVTGGARGIGEAIVRLFAKHGARVV) coordinates NAD(+). Substrate is bound at residue S194. Y207 serves as the catalytic Proton acceptor.

This sequence belongs to the short-chain dehydrogenases/reductases (SDR) family.

Required for stage-specific floral organ abortion. The sequence is that of Sex determination protein tasselseed-2 (TS2) from Zea mays (Maize).